Reading from the N-terminus, the 475-residue chain is ISWI one complex protein 4 (475 aa).

Serine 2 is subject to Phosphoserine. A Phosphothreonine modification is found at threonine 9. Disordered regions lie at residues 42 to 84 (VSVH…DFGE), 181 to 296 (EEEY…IKYH), and 454 to 475 (EMDR…KVGA). Residues serine 65 and serine 73 each carry the phosphoserine modification. 3 stretches are compositionally biased toward acidic residues: residues 72–84 (QSEE…DFGE), 181–193 (EEEY…EENE), and 241–252 (ASEEEEEEEEEK). Phosphoserine is present on serine 242. The span at 259–294 (KRPQRTKTKKVVVSKTKPNPKTKAKKEKPKPPKPIK) shows a compositional bias: basic residues. The segment covering 456–475 (DREKPSFSEDVKEEESKVGA) has biased composition (basic and acidic residues).

In terms of assembly, component of the ISW1B complex, which at least consists of ISW1, IOC2 and IOC4.

It localises to the nucleus. Functions as a component of the ISW1B complex, which acts in remodeling the chromatin by catalyzing an ATP-dependent alteration in the structure of nucleosomal DNA. The ISW1B complex acts within coding regions to control the amount of RNA polymerase II released into productive elongation and to coordinate elongation with termination and pre-mRNA processing. The protein is ISWI one complex protein 4 (IOC4) of Saccharomyces cerevisiae (strain ATCC 204508 / S288c) (Baker's yeast).